Consider the following 109-residue polypeptide: Phosphoribosyl-ATP pyrophosphatase (109 aa).

The protein belongs to the PRA-PH family.

It is found in the cytoplasm. The catalysed reaction is 1-(5-phospho-beta-D-ribosyl)-ATP + H2O = 1-(5-phospho-beta-D-ribosyl)-5'-AMP + diphosphate + H(+). It participates in amino-acid biosynthesis; L-histidine biosynthesis; L-histidine from 5-phospho-alpha-D-ribose 1-diphosphate: step 2/9. The sequence is that of Phosphoribosyl-ATP pyrophosphatase from Paramagnetospirillum magneticum (strain ATCC 700264 / AMB-1) (Magnetospirillum magneticum).